Consider the following 740-residue polypeptide: Probable apyrase 7 (740 aa).

Residues 1 to 113 (MVFGRITELF…PSTRRKLIRA (113 aa)) lie on the Cytoplasmic side of the membrane. A helical transmembrane segment spans residues 114 to 134 (VMIVMCLFLFAFLVYIVSMYI). Topologically, residues 135-581 (YTNWSRGASR…LKSYETLSMK (447 aa)) are extracellular. N-linked (GlcNAc...) asparagine glycosylation is present at Asn137. An ATP-binding site is contributed by 147–157 (VVFDCGSTGTR). Asn208 is a glycosylation site (N-linked (GlcNAc...) asparagine). Glu284 (proton acceptor) is an active-site residue. Residue 309-319 (GALDLGGSSLQ) coordinates ATP. 4 N-linked (GlcNAc...) asparagine glycosylation sites follow: Asn330, Asn374, Asn439, and Asn484. Residues 582-602 (INPIALISILILSLLLLLCAL) traverse the membrane as a helical segment. At 603 to 740 (SRVSNCLPRF…SLADSHMLKM (138 aa)) the chain is on the cytoplasmic side. Residues 706-740 (FWSSPRRSQMRLQSRRSQSREDLSSSLADSHMLKM) are disordered. Residues 708–721 (SSPRRSQMRLQSRR) show a composition bias toward low complexity.

It belongs to the GDA1/CD39 NTPase family. Ca(2+) is required as a cofactor. As to expression, detected in mature pollen grains. Also expressed in more diverse tissues such as roots, leaves, stems, pistils and sepals. More particularly expressed in the vascular bundle.

It is found in the membrane. The catalysed reaction is a ribonucleoside 5'-triphosphate + 2 H2O = a ribonucleoside 5'-phosphate + 2 phosphate + 2 H(+). Functionally, catalyzes the hydrolysis of phosphoanhydride bonds of nucleoside tri- and di-phosphates. Involved in the regulation of pollen and anther development. The polypeptide is Probable apyrase 7 (APY7) (Arabidopsis thaliana (Mouse-ear cress)).